Here is a 294-residue protein sequence, read N- to C-terminus: 4-diphosphocytidyl-2-C-methyl-D-erythritol kinase (294 aa).

Lysine 23 is an active-site residue. Position 106-116 (106-116 (PMGGGLGGGSS)) interacts with ATP. Residue aspartate 148 is part of the active site.

It belongs to the GHMP kinase family. IspE subfamily.

It carries out the reaction 4-CDP-2-C-methyl-D-erythritol + ATP = 4-CDP-2-C-methyl-D-erythritol 2-phosphate + ADP + H(+). The protein operates within isoprenoid biosynthesis; isopentenyl diphosphate biosynthesis via DXP pathway; isopentenyl diphosphate from 1-deoxy-D-xylulose 5-phosphate: step 3/6. Its function is as follows. Catalyzes the phosphorylation of the position 2 hydroxy group of 4-diphosphocytidyl-2C-methyl-D-erythritol. This chain is 4-diphosphocytidyl-2-C-methyl-D-erythritol kinase, found in Nitrosospira multiformis (strain ATCC 25196 / NCIMB 11849 / C 71).